Here is a 256-residue protein sequence, read N- to C-terminus: Ribonuclease T2 (256 aa).

The first 24 residues, 1–24 (MRPAALRGALLGCLCLALLCLGGA), serve as a signal peptide directing secretion. An intrachain disulfide couples C48 to C55. Residue H65 is part of the active site. 3 disulfide bridges follow: C75–C121, C184–C241, and C202–C213. Residues N76 and N106 are each glycosylated (N-linked (GlcNAc...) asparagine). Active-site residues include E114 and H118. N-linked (GlcNAc...) asparagine glycosylation occurs at N212.

Belongs to the RNase T2 family. Ubiquitous. Higher expression levels observed in the temporal lobe and fetal brain.

Its subcellular location is the secreted. The protein localises to the lysosome lumen. The protein resides in the endoplasmic reticulum lumen. It is found in the mitochondrion intermembrane space. It carries out the reaction a ribonucleotidyl-ribonucleotide-RNA + H2O = a 3'-end 3'-phospho-ribonucleotide-RNA + a 5'-end dephospho-ribonucleoside-RNA + H(+). It catalyses the reaction an adenylyl-uridine-RNA = a 3'-end 2',3'-cyclophospho-AMP-RNA + a 5'-end dephospho-uridine-RNA. The catalysed reaction is a guanylyl-uridine-RNA = a 3'-end 2',3'-cyclophospho-GMP-RNA + a 5'-end dephospho-uridine-RNA. Inhibited by Zn(2+) and Cu(2+). Its function is as follows. Ribonuclease that plays an essential role in innate immune response by recognizing and degrading RNAs from microbial pathogens that are subsequently sensed by TLR8. Cleaves preferentially single-stranded RNA molecules between purine and uridine residues, which critically contributes to the supply of catabolic uridine and the generation of purine-2',3'-cyclophosphate-terminated oligoribonucleotides. In turn, RNase T2 degradation products promote the RNA-dependent activation of TLR8. In plasmacytoid dendritic cells, it cooperates with PLD3 or PLD4 5'-&gt;3' exonucleases to process RNA fragments and release 2',3'-cyclic guanosine monophosphate (2',3'-cGMP), a potent stimulatory ligand for TLR7. Also plays a key role in degradation of mitochondrial RNA and processing of non-coding RNA imported from the cytosol into mitochondria. Participates as well in degradation of mitochondrion-associated cytosolic rRNAs. This chain is Ribonuclease T2 (RNASET2), found in Homo sapiens (Human).